Here is a 388-residue protein sequence, read N- to C-terminus: Succinate--CoA ligase [ADP-forming] subunit beta (388 aa).

In terms of domain architecture, ATP-grasp spans 9-244 (KQLFAEYGLP…PSQDDPREAH (236 aa)). Residues Lys-46, 53–55 (GRG), Glu-99, Thr-102, and Glu-107 each bind ATP. Mg(2+) is bound by residues Asn-199 and Asp-213. Substrate contacts are provided by residues Asn-264 and 321 to 323 (GIV).

The protein belongs to the succinate/malate CoA ligase beta subunit family. As to quaternary structure, heterotetramer of two alpha and two beta subunits. Mg(2+) serves as cofactor.

It catalyses the reaction succinate + ATP + CoA = succinyl-CoA + ADP + phosphate. It carries out the reaction GTP + succinate + CoA = succinyl-CoA + GDP + phosphate. The protein operates within carbohydrate metabolism; tricarboxylic acid cycle; succinate from succinyl-CoA (ligase route): step 1/1. Its function is as follows. Succinyl-CoA synthetase functions in the citric acid cycle (TCA), coupling the hydrolysis of succinyl-CoA to the synthesis of either ATP or GTP and thus represents the only step of substrate-level phosphorylation in the TCA. The beta subunit provides nucleotide specificity of the enzyme and binds the substrate succinate, while the binding sites for coenzyme A and phosphate are found in the alpha subunit. In Stutzerimonas stutzeri (strain A1501) (Pseudomonas stutzeri), this protein is Succinate--CoA ligase [ADP-forming] subunit beta.